A 209-amino-acid chain; its full sequence is Kynurenine formamidase (209 aa).

Tryptophan 19 contributes to the substrate binding site. Residues histidine 49, histidine 53, and aspartate 55 each contribute to the Zn(2+) site. Histidine 59 functions as the Proton donor/acceptor in the catalytic mechanism. Positions 160 and 172 each coordinate Zn(2+).

This sequence belongs to the Cyclase 1 superfamily. KynB family. Homodimer. The cofactor is Zn(2+).

It catalyses the reaction N-formyl-L-kynurenine + H2O = L-kynurenine + formate + H(+). It functions in the pathway amino-acid degradation; L-tryptophan degradation via kynurenine pathway; L-kynurenine from L-tryptophan: step 2/2. Functionally, catalyzes the hydrolysis of N-formyl-L-kynurenine to L-kynurenine, the second step in the kynurenine pathway of tryptophan degradation. This is Kynurenine formamidase from Ralstonia nicotianae (strain ATCC BAA-1114 / GMI1000) (Ralstonia solanacearum).